A 112-amino-acid chain; its full sequence is cAMP-regulated phosphoprotein 19 (112 aa).

Positions 1 to 11 are enriched in low complexity; it reads MSAESPEPASA. Residues 1 to 49 are disordered; sequence MSAESPEPASAEEQKEMEDKVLSPEKAEEAKLKARYPHLGQKPGGSDFL. Basic and acidic residues predominate over residues 12 to 32; the sequence is EEQKEMEDKVLSPEKAEEAKL. Phosphoserine; by GWL occurs at positions 62 and 104. The interval 72–112 is disordered; sequence MKNKQLPTAAPDKTEVTGDHIPTPQDLPQRKPSLVASKLAG. Phosphoserine; by PKA is present on serine 104.

This sequence belongs to the endosulfine family. As to quaternary structure, interacts (when phosphorylated at Ser-62) with PPP2R2D. In terms of processing, phosphorylation at Ser-62 by MASTL/GWL during mitosis is essential for interaction with PPP2R2D (PR55-delta) and subsequent inactivation of PP2A.

It is found in the cytoplasm. In terms of biological role, protein phosphatase inhibitor that specifically inhibits protein phosphatase 2A (PP2A) during mitosis. Inhibition of PP2A is enhanced when ARPP19 is phosphorylated. When phosphorylated at Ser-62 during mitosis, specifically interacts with PPP2R2D (PR55-delta) and inhibits its activity, leading to inactivation of PP2A, an essential condition to keep cyclin-B1-CDK1 activity high during M phase. This chain is cAMP-regulated phosphoprotein 19 (ARPP19), found in Taeniopygia guttata (Zebra finch).